A 149-amino-acid polypeptide reads, in one-letter code: MRCVVQRVREASVTIGGERFSSIGAGLLVLAGISREDTEADLAWMSRKLPNLRIFEDDEGRMNRSVKEIGGELLVVSQFTLYADASRGNRPGFTESAPSEVAQPLFDRFVELLRRESGLPVETGSFGADMQVSLINDGPVTIILESPKK.

The Gly-cisPro motif, important for rejection of L-amino acids motif lies at glycine 138–proline 139.

Belongs to the DTD family. As to quaternary structure, homodimer.

It localises to the cytoplasm. The catalysed reaction is glycyl-tRNA(Ala) + H2O = tRNA(Ala) + glycine + H(+). It carries out the reaction a D-aminoacyl-tRNA + H2O = a tRNA + a D-alpha-amino acid + H(+). An aminoacyl-tRNA editing enzyme that deacylates mischarged D-aminoacyl-tRNAs. Also deacylates mischarged glycyl-tRNA(Ala), protecting cells against glycine mischarging by AlaRS. Acts via tRNA-based rather than protein-based catalysis; rejects L-amino acids rather than detecting D-amino acids in the active site. By recycling D-aminoacyl-tRNA to D-amino acids and free tRNA molecules, this enzyme counteracts the toxicity associated with the formation of D-aminoacyl-tRNA entities in vivo and helps enforce protein L-homochirality. This chain is D-aminoacyl-tRNA deacylase, found in Chlorobaculum parvum (strain DSM 263 / NCIMB 8327) (Chlorobium vibrioforme subsp. thiosulfatophilum).